The chain runs to 470 residues: V-type proton ATPase subunit S1 (470 aa).

The signal sequence occupies residues 1 to 41 (MMAAMATARVRMGPRCAQALWRMPWLPVFLSLAAAAAAAAA). The propeptide occupies 42-231 (EQQVPLVLWS…TAVRPSRVAR (190 aa)). At 42–419 (EQQVPLVLWS…EQFSYASDCA (378 aa)) the chain is on the lumenal side. N-linked (GlcNAc...) asparagine glycosylation is found at Asn-170, Asn-261, Asn-273, Asn-296, Asn-303, Asn-350, and Asn-357. A disulfide bridge links Cys-371 with Cys-418. The chain crosses the membrane as a helical span at residues 420 to 440 (SFFSPGIWMGLLTSLFMLFIF). At 441–470 (TYGLHMILSLKTMDRFDDHKGPTISLTQIV) the chain is on the cytoplasmic side. Residue Ser-465 is modified to Phosphoserine.

Belongs to the vacuolar ATPase subunit S1 family. In terms of assembly, accessory component of the multisubunit proton-transporting vacuolar (V)-ATPase protein pump. Interacts (via N-terminus) with ATP6AP2 (via N-terminus). Interacts with RNASEK. Interacts with TMEM106B (via C-terminus). Post-translationally, N-glycosylated. As to expression, widely expressed, with highest levels in brain and lowest in liver and duodenum.

It localises to the endoplasmic reticulum membrane. The protein resides in the endoplasmic reticulum-Golgi intermediate compartment membrane. It is found in the cytoplasmic vesicle. The protein localises to the secretory vesicle. Its subcellular location is the synaptic vesicle membrane. It localises to the clathrin-coated vesicle membrane. Accessory subunit of the proton-transporting vacuolar (V)-ATPase protein pump, which is required for luminal acidification of secretory vesicles. Guides the V-type ATPase into specialized subcellular compartments, such as neuroendocrine regulated secretory vesicles or the ruffled border of the osteoclast, thereby regulating its activity. Involved in membrane trafficking and Ca(2+)-dependent membrane fusion. May play a role in the assembly of the V-type ATPase complex. In aerobic conditions, involved in intracellular iron homeostasis, thus triggering the activity of Fe(2+) prolyl hydroxylase (PHD) enzymes, and leading to HIF1A hydroxylation and subsequent proteasomal degradation. In islets of Langerhans cells, may regulate the acidification of dense-core secretory granules. This Homo sapiens (Human) protein is V-type proton ATPase subunit S1 (ATP6AP1).